The sequence spans 516 residues: Probable inactive beta-glucosidase 14 (516 aa).

The first 23 residues, 1-23 (MAAAWLVVLLTVHRLLHLSGVSA), serve as a signal peptide directing secretion. A beta-D-glucoside contacts are provided by residues glutamine 43, histidine 145, and 190–191 (NQ). N-linked (GlcNAc...) asparagine glycosylation occurs at asparagine 193. A disulfide bridge connects residues cysteine 210 and cysteine 217. Asparagine 221 and asparagine 270 each carry an N-linked (GlcNAc...) asparagine glycan. A beta-D-glucoside is bound at residue tyrosine 334. The cysteines at positions 342 and 347 are disulfide-linked. Glutamate 405 lines the a beta-D-glucoside pocket. Glutamate 405 functions as the Nucleophile in the catalytic mechanism. Asparagine 415 and asparagine 423 each carry an N-linked (GlcNAc...) asparagine glycan. A beta-D-glucoside contacts are provided by residues tryptophan 454, 461–462 (EW), and phenylalanine 470.

Belongs to the glycosyl hydrolase 1 family. In terms of tissue distribution, expressed in flowers and endosperm.

In Oryza sativa subsp. japonica (Rice), this protein is Probable inactive beta-glucosidase 14.